Here is a 248-residue protein sequence, read N- to C-terminus: Pyridoxine 5'-phosphate synthase (248 aa).

Residue asparagine 12 coordinates 3-amino-2-oxopropyl phosphate. 14–15 (DH) is a 1-deoxy-D-xylulose 5-phosphate binding site. Arginine 23 contributes to the 3-amino-2-oxopropyl phosphate binding site. Histidine 48 serves as the catalytic Proton acceptor. 1-deoxy-D-xylulose 5-phosphate-binding residues include arginine 50 and histidine 55. Residue glutamate 75 is the Proton acceptor of the active site. Residue threonine 105 coordinates 1-deoxy-D-xylulose 5-phosphate. The Proton donor role is filled by histidine 196. 3-amino-2-oxopropyl phosphate is bound by residues glycine 197 and 218 to 219 (GH).

This sequence belongs to the PNP synthase family. In terms of assembly, homooctamer; tetramer of dimers.

Its subcellular location is the cytoplasm. The enzyme catalyses 3-amino-2-oxopropyl phosphate + 1-deoxy-D-xylulose 5-phosphate = pyridoxine 5'-phosphate + phosphate + 2 H2O + H(+). Its pathway is cofactor biosynthesis; pyridoxine 5'-phosphate biosynthesis; pyridoxine 5'-phosphate from D-erythrose 4-phosphate: step 5/5. Functionally, catalyzes the complicated ring closure reaction between the two acyclic compounds 1-deoxy-D-xylulose-5-phosphate (DXP) and 3-amino-2-oxopropyl phosphate (1-amino-acetone-3-phosphate or AAP) to form pyridoxine 5'-phosphate (PNP) and inorganic phosphate. The polypeptide is Pyridoxine 5'-phosphate synthase (Pseudomonas aeruginosa (strain UCBPP-PA14)).